We begin with the raw amino-acid sequence, 276 residues long: Large ribosomal subunit protein uL2 (276 aa).

Residues 221-276 (RGSVMNPNDHPHGGGEGRAPIGRKAPVTPWGKPTLGLKTRKKKNKSDQYIIRRRKK) are disordered.

This sequence belongs to the universal ribosomal protein uL2 family. As to quaternary structure, part of the 50S ribosomal subunit. Forms a bridge to the 30S subunit in the 70S ribosome.

Functionally, one of the primary rRNA binding proteins. Required for association of the 30S and 50S subunits to form the 70S ribosome, for tRNA binding and peptide bond formation. It has been suggested to have peptidyltransferase activity; this is somewhat controversial. Makes several contacts with the 16S rRNA in the 70S ribosome. The protein is Large ribosomal subunit protein uL2 of Brevibacillus brevis (strain 47 / JCM 6285 / NBRC 100599).